A 376-amino-acid chain; its full sequence is MKKIILVAGGTGGHFFPAVALGEELIKRGYEVHFITDLRCKQYIKQDMKVIFHILDLKRSGNIFLFLPRLSIAVLKAIKLLYNMKPSVTVGFGGYPVIAPMFAAIFLRVPIIIHEQNSYLGKVNKFFASFAKKIAISYEKIKNLPEFAKSKIVVTGGVVRENIRELKVIEMSSRGLTTGSKKSLIKALDSVVKPRNDKLFTIFIFGGSQGAKLFSELIPASIQFLMQKQPSLELNIIQQAALDDQVKIKDIYSKLNITYEFAEFFDNMALQYKEADLVISRAGASTIEELTYIGLPAIFIPLPSAADNHQYYNAQLLEDEKTGWCLEQNNISAGKLADKILELISNPKILEDASQNLLKRRKEGHKLLSNLIEEVI.

UDP-N-acetyl-alpha-D-glucosamine is bound by residues Thr11–Gly13, Asn117, Arg160, Ser208, and Gln310.

This sequence belongs to the glycosyltransferase 28 family. MurG subfamily.

Its subcellular location is the cell inner membrane. It carries out the reaction di-trans,octa-cis-undecaprenyl diphospho-N-acetyl-alpha-D-muramoyl-L-alanyl-D-glutamyl-meso-2,6-diaminopimeloyl-D-alanyl-D-alanine + UDP-N-acetyl-alpha-D-glucosamine = di-trans,octa-cis-undecaprenyl diphospho-[N-acetyl-alpha-D-glucosaminyl-(1-&gt;4)]-N-acetyl-alpha-D-muramoyl-L-alanyl-D-glutamyl-meso-2,6-diaminopimeloyl-D-alanyl-D-alanine + UDP + H(+). It participates in cell wall biogenesis; peptidoglycan biosynthesis. Cell wall formation. Catalyzes the transfer of a GlcNAc subunit on undecaprenyl-pyrophosphoryl-MurNAc-pentapeptide (lipid intermediate I) to form undecaprenyl-pyrophosphoryl-MurNAc-(pentapeptide)GlcNAc (lipid intermediate II). This is UDP-N-acetylglucosamine--N-acetylmuramyl-(pentapeptide) pyrophosphoryl-undecaprenol N-acetylglucosamine transferase from Rickettsia africae (strain ESF-5).